A 320-amino-acid polypeptide reads, in one-letter code: Sliding-clamp-loader large subunit (320 aa).

ATP is bound by residues Glu-12–Tyr-15, Ile-24, Gly-53–Thr-58, and Arg-205.

This sequence belongs to the Tevenvirinae sliding-clamp-loader large subunit family. The sliding-clamp-loader consists of 4 large subunits and 1 small subunit. Interacts with the sliding clamp; this interaction allows the sliding-clamp-loader to open the sliding clamp. Part of the replicase complex that includes the DNA polymerase, the polymerase clamp, the clamp loader complex, the single-stranded DNA binding protein, the primase, the helicase and the helicase assembly factor.

Forms the sliding-clamp-loader together with the small subunit. Functions as an ATPase enzyme. The clamp loader holds the clamp in an open conformation and places it onto the DNA. 4 ATP molecules must bind to the sliding-clamp-loader before the latter can open the sliding clamp. ATP hydrolysis triggers the detachment of the sliding clamp from the sliding-clamp-loader, freeing the sliding clamp to track along DNA. This chain is Sliding-clamp-loader large subunit (44), found in Escherichia phage RB69 (Bacteriophage RB69).